The chain runs to 432 residues: C-type cytochrome OmcS (432 aa).

A signal peptide spans 1-25; that stretch reads MKKGMKVSLSVAAAALLMSAPAAFA.

Heme serves as cofactor.

Its subcellular location is the cell outer membrane. It is found in the cell surface. Functionally, plays an important role in extracellular electron transfer. Can transfer electrons to insoluble Fe(3+) oxides as well as other extracellular electron acceptors, including Mn(4+) oxide and humic substances. Essential for direct interspecies electron transfer (DIET) in cocultures with G.metallireducens. The chain is C-type cytochrome OmcS from Geobacter sulfurreducens (strain ATCC 51573 / DSM 12127 / PCA).